The primary structure comprises 512 residues: Kelch repeat protein C2 (512 aa).

Residues 2 to 67 (ESVIFSINGE…MRWKKINITI (66 aa)) form the BTB domain. Positions 102 to 176 (CIRMFNFSKR…LLKWIHKNPN (75 aa)) constitute a BACK domain. Kelch repeat units follow at residues 216–261 (IKHN…LHNC), 262–307 (LYII…VNNG), 309–354 (LYVI…FVND), 356–403 (IYVM…EYDG), 405–449 (IYVI…SCGD), and 452–498 (LIIA…THKS).

This sequence belongs to the poxviruses Kelch family.

The polypeptide is Kelch repeat protein C2 (Rabbitpox virus (strain Utrecht) (RPV)).